A 719-amino-acid polypeptide reads, in one-letter code: Fatty acid oxidation complex subunit alpha (719 aa).

An enoyl-CoA hydratase/isomerase region spans residues M1 to A190. D298 provides a ligand contact to substrate. The segment at H313–A719 is 3-hydroxyacyl-CoA dehydrogenase. NAD(+) is bound by residues M326, D345, V402–E404, K409, and S431. H452 (for 3-hydroxyacyl-CoA dehydrogenase activity) is an active-site residue. N455 serves as a coordination point for NAD(+). Position 502 (N502) interacts with substrate.

In the N-terminal section; belongs to the enoyl-CoA hydratase/isomerase family. The protein in the C-terminal section; belongs to the 3-hydroxyacyl-CoA dehydrogenase family. In terms of assembly, heterotetramer of two alpha chains (FadB) and two beta chains (FadA).

The catalysed reaction is a (3S)-3-hydroxyacyl-CoA + NAD(+) = a 3-oxoacyl-CoA + NADH + H(+). It catalyses the reaction a (3S)-3-hydroxyacyl-CoA = a (2E)-enoyl-CoA + H2O. The enzyme catalyses a 4-saturated-(3S)-3-hydroxyacyl-CoA = a (3E)-enoyl-CoA + H2O. It carries out the reaction (3S)-3-hydroxybutanoyl-CoA = (3R)-3-hydroxybutanoyl-CoA. The catalysed reaction is a (3Z)-enoyl-CoA = a 4-saturated (2E)-enoyl-CoA. It catalyses the reaction a (3E)-enoyl-CoA = a 4-saturated (2E)-enoyl-CoA. Its pathway is lipid metabolism; fatty acid beta-oxidation. In terms of biological role, involved in the aerobic and anaerobic degradation of long-chain fatty acids via beta-oxidation cycle. Catalyzes the formation of 3-oxoacyl-CoA from enoyl-CoA via L-3-hydroxyacyl-CoA. It can also use D-3-hydroxyacyl-CoA and cis-3-enoyl-CoA as substrate. The chain is Fatty acid oxidation complex subunit alpha from Psychrobacter cryohalolentis (strain ATCC BAA-1226 / DSM 17306 / VKM B-2378 / K5).